Here is a 153-residue protein sequence, read N- to C-terminus: Guanyl-specific ribonuclease N1 (153 aa).

Positions 1 to 20 (MVQLLSAFVSLLSVVAVSGA) are cleaved as a signal peptide. The propeptide occupies 21 to 49 (AIPAPAPEAVVDVAPETATIEPTGNFTAQ). 2 disulfide bridges follow: Cys-51–Cys-59 and Cys-55–Cys-152. Residue His-89 is part of the active site. Catalysis depends on Glu-107, which acts as the Proton acceptor. The active-site Proton donor is His-141.

It belongs to the ribonuclease N1/T1 family.

It carries out the reaction [RNA] containing guanosine + H2O = an [RNA fragment]-3'-guanosine-3'-phosphate + a 5'-hydroxy-ribonucleotide-3'-[RNA fragment].. This chain is Guanyl-specific ribonuclease N1 (grn), found in Neurospora crassa (strain ATCC 24698 / 74-OR23-1A / CBS 708.71 / DSM 1257 / FGSC 987).